The primary structure comprises 85 residues: HssA/B-like protein 62 (85 aa).

The protein belongs to the hssA/B family.

This is HssA/B-like protein 62 (hssl62) from Dictyostelium discoideum (Social amoeba).